The sequence spans 361 residues: Serine/threonine-protein kinase SRK2B (361 aa).

Residues 4 to 260 enclose the Protein kinase domain; that stretch reads YELVKDIGAG…IGDIKKHPWF (257 aa). ATP-binding positions include 10–18 and Lys-33; that span reads IGAGNFGVA. The active-site Proton acceptor is the Asp-123. Position 154 is a phosphoserine (Ser-154). Residues 311 to 361 are disordered; that stretch reads AFGWGGGEDAEGKEEDAEEEVEEVEEEEDEEDEYDKTVKQVHASMGEVRVS. Residues 318–344 are compositionally biased toward acidic residues; that stretch reads EDAEGKEEDAEEEVEEVEEEEDEEDEY.

This sequence belongs to the protein kinase superfamily. Ser/Thr protein kinase family. As to expression, expressed in seedlings.

The enzyme catalyses L-seryl-[protein] + ATP = O-phospho-L-seryl-[protein] + ADP + H(+). It carries out the reaction L-threonyl-[protein] + ATP = O-phospho-L-threonyl-[protein] + ADP + H(+). The polypeptide is Serine/threonine-protein kinase SRK2B (SRK2B) (Arabidopsis thaliana (Mouse-ear cress)).